The chain runs to 494 residues: MNDDARPAPEPQDIPPHSGAADEVNRQDPSRRSVLWTTAGVAGAGLGLGALGAGTASAAGRSAPDAVAAAEAVAAAPPRQGRTMAGVPFERRSTVRVGIIGLGNRGDSMIDLFLALPGVQVKAVCDTVRDKAEKAAKKVTAAGQPAPAIYAKDEHDYENLCKRGDIDFVYVVTPWELHFPMAKTAMLNGKHVGVECPIAMRLEELWQLVDLSERTRRHCMQLENCCYGKNEMRVLRMAHAGLFGELQHGAGAYNHDLRELMFDPDYYEGPWRRLWHTRLRGDLYPNHGFGPVANYMDVNRGDRVVSISSVGTTPLGLAAYREEHMPAGDPSWKESYIGADRTISLVQTAKGRVIRLEHDVSSPHPYSRINSLGGTKGVFEDYPERIYLEPTNTNHQWDDFKKYAEWDHWLWKEHANPPGGHGGMDYIMVFRLMQCMRLGLVPDFDVYDAAVWTAPVPLSHLSIKAKGVPLPIPDFTRGEWKKTRSGMDSEKPAE.

Positions 1 to 32 (MNDDARPAPEPQDIPPHSGAADEVNRQDPSRR) are disordered. The tat-type signal signal peptide spans 1 to 58 (MNDDARPAPEPQDIPPHSGAADEVNRQDPSRRSVLWTTAGVAGAGLGLGALGAGTASA). NAD(+)-binding positions include 104–105 (NR), Asp126, 175–178 (WELH), 195–196 (EC), and Asn224. Substrate contacts are provided by residues Tyr253, Arg272, 284 to 287 (YPNH), and Tyr366. Tyr284 lines the NAD(+) pocket.

It belongs to the Gfo/Idh/MocA family. Glycosyl hydrolase 109 subfamily. It depends on NAD(+) as a cofactor. Predicted to be exported by the Tat system. The position of the signal peptide cleavage has not been experimentally proven.

In terms of biological role, glycosidase. The chain is Glycosyl hydrolase family 109 protein from Streptomyces filamentosus (Streptomyces roseosporus).